A 196-amino-acid chain; its full sequence is Potassium-transporting ATPase KdpC subunit (196 aa).

A helical membrane pass occupies residues 7–27 (PAIVSAGLFTVLLGLAYPLAV).

The protein belongs to the KdpC family. In terms of assembly, the system is composed of three essential subunits: KdpA, KdpB and KdpC.

It localises to the cell inner membrane. Part of the high-affinity ATP-driven potassium transport (or Kdp) system, which catalyzes the hydrolysis of ATP coupled with the electrogenic transport of potassium into the cytoplasm. This subunit acts as a catalytic chaperone that increases the ATP-binding affinity of the ATP-hydrolyzing subunit KdpB by the formation of a transient KdpB/KdpC/ATP ternary complex. The sequence is that of Potassium-transporting ATPase KdpC subunit from Caulobacter sp. (strain K31).